We begin with the raw amino-acid sequence, 184 residues long: Endoribonuclease YbeY (184 aa).

H118, H122, and H128 together coordinate Zn(2+).

Belongs to the endoribonuclease YbeY family. It depends on Zn(2+) as a cofactor.

It localises to the cytoplasm. Functionally, single strand-specific metallo-endoribonuclease involved in late-stage 70S ribosome quality control and in maturation of the 3' terminus of the 16S rRNA. In Nocardia farcinica (strain IFM 10152), this protein is Endoribonuclease YbeY.